Here is a 106-residue protein sequence, read N- to C-terminus: Nucleoid-associated protein XOO1065 (106 aa).

The segment covering 80 to 89 (KIDAESKDRM) has biased composition (basic and acidic residues). A disordered region spans residues 80–106 (KIDAESKDRMGSATAGMQLPPGMKLPF).

The protein belongs to the YbaB/EbfC family. Homodimer.

It is found in the cytoplasm. The protein resides in the nucleoid. In terms of biological role, binds to DNA and alters its conformation. May be involved in regulation of gene expression, nucleoid organization and DNA protection. This is Nucleoid-associated protein XOO1065 from Xanthomonas oryzae pv. oryzae (strain KACC10331 / KXO85).